Reading from the N-terminus, the 131-residue chain is Binder of sperm protein homolog 2 (131 aa).

The signal sequence occupies residues 1–22 (MEVMSHLVHWVFLAVYMYELNA). Fibronectin type-II domains lie at 35–79 (ISTD…YCTA) and 80–128 (QDPP…QCSP). 4 cysteine pairs are disulfide-bonded: cysteine 40–cysteine 64, cysteine 54–cysteine 77, cysteine 85–cysteine 111, and cysteine 99–cysteine 126.

Belongs to the seminal plasma protein family. As to expression, epididymis.

It is found in the secreted. Its function is as follows. Binds sperm in vitro but has no effect on sperm capacitation. Also binds gelatin and heparin, but not chondroitin sulfate B or phospholipid liposomes. The chain is Binder of sperm protein homolog 2 from Mus musculus (Mouse).